Here is a 151-residue protein sequence, read N- to C-terminus: Protein SprT-like (151 aa).

One can recognise a SprT-like domain in the interval 6-147; it reads LQRMVENLSE…GHCNGKLRMK (142 aa). Histidine 67 is a Zn(2+) binding site. Glutamate 68 is an active-site residue. Histidine 71 contacts Zn(2+).

This sequence belongs to the SprT family. Zn(2+) is required as a cofactor.

It is found in the cytoplasm. The polypeptide is Protein SprT-like (Staphylococcus aureus (strain Mu3 / ATCC 700698)).